Consider the following 484-residue polypeptide: Glycogen synthase (484 aa).

Lys15 is a binding site for ADP-alpha-D-glucose.

The protein belongs to the glycosyltransferase 1 family. Bacterial/plant glycogen synthase subfamily.

The enzyme catalyses [(1-&gt;4)-alpha-D-glucosyl](n) + ADP-alpha-D-glucose = [(1-&gt;4)-alpha-D-glucosyl](n+1) + ADP + H(+). It functions in the pathway glycan biosynthesis; glycogen biosynthesis. Functionally, synthesizes alpha-1,4-glucan chains using ADP-glucose. The protein is Glycogen synthase of Koribacter versatilis (strain Ellin345).